The following is a 147-amino-acid chain: MRLEDLRPTPGAMKKRKRVGRGPGSGHGKTSGRGHKGQKARGSGKVHIWFEGGQTPLHRRLPKRGFNNINKKVYAVVNVKVLEERFEANEEVTPEKLIERKIIKDLKDGIKILGDGELTKPLVVKAHAFSKSAVEKIESAGGKAEVI.

A disordered region spans residues 1–45; that stretch reads MRLEDLRPTPGAMKKRKRVGRGPGSGHGKTSGRGHKGQKARGSGK. Residues 30-44 are compositionally biased toward basic residues; sequence TSGRGHKGQKARGSG.

It belongs to the universal ribosomal protein uL15 family. As to quaternary structure, part of the 50S ribosomal subunit.

Its function is as follows. Binds to the 23S rRNA. The chain is Large ribosomal subunit protein uL15 from Thermotoga sp. (strain RQ2).